Reading from the N-terminus, the 331-residue chain is Anthranilate phosphoribosyltransferase (331 aa).

5-phospho-alpha-D-ribose 1-diphosphate-binding positions include Gly79, 82-83 (GD), Thr87, 89-92 (NVST), 107-115 (KHGNYGVSS), and Ser119. Residue Gly79 participates in anthranilate binding. A Mg(2+)-binding site is contributed by Ser91. Asn110 is a binding site for anthranilate. Arg165 lines the anthranilate pocket. Residues Asp223 and Glu224 each contribute to the Mg(2+) site.

It belongs to the anthranilate phosphoribosyltransferase family. As to quaternary structure, homodimer. Requires Mg(2+) as cofactor.

It carries out the reaction N-(5-phospho-beta-D-ribosyl)anthranilate + diphosphate = 5-phospho-alpha-D-ribose 1-diphosphate + anthranilate. It functions in the pathway amino-acid biosynthesis; L-tryptophan biosynthesis; L-tryptophan from chorismate: step 2/5. In terms of biological role, catalyzes the transfer of the phosphoribosyl group of 5-phosphorylribose-1-pyrophosphate (PRPP) to anthranilate to yield N-(5'-phosphoribosyl)-anthranilate (PRA). The polypeptide is Anthranilate phosphoribosyltransferase (Christiangramia forsetii (strain DSM 17595 / CGMCC 1.15422 / KT0803) (Gramella forsetii)).